Reading from the N-terminus, the 878-residue chain is Protein argonaute 6 (878 aa).

The segment covering 1–17 (METSSSLPLSPISIEPE) has biased composition (low complexity). Residues 1–25 (METSSSLPLSPISIEPEQPSHRDYD) are disordered. The PAZ domain maps to 259 to 372 (PVIEFLKANQ…LPLEFCNLVS (114 aa)). One can recognise a Piwi domain in the interval 541-851 (FILCILPERK…AAAQVAQFTK (311 aa)).

The protein belongs to the argonaute family. Ago subfamily. In terms of tissue distribution, expressed in roots, cotyledons and shoot meristematic region.

It is found in the nucleus. Its function is as follows. Involved in transcriptional gene silencing (TGS). Component of the RISC complex that associate with the small interfering RNA (siRNA) pathway involved in direct cytosine methylation at endogenous DNA repeats. Required for the accumulation of specific siRNAs derived from transgene and heterochromatin-related endogenous loci. Involved in RNA-directed DNA methylation (RdDM) at specific endogenous loci. Probably not required for the accumulation of siRNAs derived from transgene inverted repeats that induce post-transcriptional gene silencing (PTGS). Associates mainly with small RNAs of 24 nucleotide in length and preferentially recruits small RNAs with a 5' terminal adenosine. Targeted by turnip yellows virus (TuYV) protein P0 (via F-box-like domain) for probable proteasome degradation and thereby inactivating AGO6 function in RNA silencing. The polypeptide is Protein argonaute 6 (AGO6) (Arabidopsis thaliana (Mouse-ear cress)).